Consider the following 104-residue polypeptide: Phosphocarrier protein HPr (104 aa).

Residues 17 to 104 (ELSAIFMIRN…EVFNSGFGEL (88 aa)) enclose the HPr domain. The active-site Pros-phosphohistidine intermediate is the histidine 31.

The protein belongs to the HPr family.

Its subcellular location is the cytoplasm. General (non sugar-specific) component of the phosphoenolpyruvate-dependent sugar phosphotransferase system (sugar PTS). This major carbohydrate active-transport system catalyzes the phosphorylation of incoming sugar substrates concomitantly with their translocation across the cell membrane. The phosphoryl group from phosphoenolpyruvate (PEP) is transferred to the phosphoryl carrier protein HPr by enzyme I. Phospho-HPr then transfers it to the PTS EIIA domain. The protein is Phosphocarrier protein HPr (ptsH) of Chlamydia muridarum (strain MoPn / Nigg).